Consider the following 747-residue polypeptide: Polyribonucleotide nucleotidyltransferase (747 aa).

Asp493 and Asp499 together coordinate Mg(2+). Positions 560–619 (PRIITLQINPEKIGALIGPGGKTVRGITEATGAQIDIEEDGRVYISTPDAAAAQQAVAMV) constitute a KH domain. One can recognise an S1 motif domain in the interval 629–698 (GDIFLGKVVR…GTGKVSLSRR (70 aa)). The segment at 705–747 (TAEDRRAAGAGRGLRDGGGRSGGSDRGGDRGPRGDDRQRPRRR) is disordered. Basic and acidic residues-rich tracts occupy residues 706 to 722 (AEDR…RDGG) and 730 to 747 (RGGD…PRRR).

This sequence belongs to the polyribonucleotide nucleotidyltransferase family. Mg(2+) serves as cofactor.

It is found in the cytoplasm. It carries out the reaction RNA(n+1) + phosphate = RNA(n) + a ribonucleoside 5'-diphosphate. Involved in mRNA degradation. Catalyzes the phosphorolysis of single-stranded polyribonucleotides processively in the 3'- to 5'-direction. The chain is Polyribonucleotide nucleotidyltransferase from Roseiflexus sp. (strain RS-1).